Here is a 912-residue protein sequence, read N- to C-terminus: Probable dipeptidyl-aminopeptidase B (912 aa).

The segment at 1–74 is disordered; sequence MSSALSPEGD…GPFLGPGASL (74 aa). Topologically, residues 1-85 are cytoplasmic; the sequence is MSSALSPEGD…REPMDRGLRR (85 aa). The span at 16–27 shows a compositional bias: low complexity; that stretch reads DSLSSVSTTSLV. The segment covering 30-50 has biased composition (basic and acidic residues); the sequence is RIQEKTEMDADNDKEKDPRAL. Residues 51 to 63 are compositionally biased toward acidic residues; the sequence is DDEDPLRDEDDLE. A helical; Signal-anchor for type II membrane protein membrane pass occupies residues 86-106; that stretch reads ILIIVAVVFIGGWLAGLGIFI. The Vacuolar segment spans residues 107-912; it reads ASGSYHHESD…KRHMVPQALV (806 aa). The N-linked (GlcNAc...) asparagine glycan is linked to Asn344. Ser749 (charge relay system) is an active-site residue. N-linked (GlcNAc...) asparagine glycosylation occurs at Asn808. Active-site charge relay system residues include Asp826 and His859. The interval 892-912 is disordered; sequence PQPQKDPVEKEKRHMVPQALV.

Belongs to the peptidase S9B family.

It localises to the vacuole membrane. It catalyses the reaction Release of an N-terminal dipeptide, Xaa-Yaa-|-Zaa-, from a polypeptide, preferentially when Yaa is Pro, provided Zaa is neither Pro nor hydroxyproline.. Its function is as follows. Type IV dipeptidyl-peptidase which removes N-terminal dipeptides sequentially from polypeptides having unsubstituted N-termini provided that the penultimate residue is proline. This chain is Probable dipeptidyl-aminopeptidase B (DAPB), found in Fusarium vanettenii (strain ATCC MYA-4622 / CBS 123669 / FGSC 9596 / NRRL 45880 / 77-13-4) (Fusarium solani subsp. pisi).